The primary structure comprises 276 residues: Omega-amidase NIT2-A (276 aa).

The 245-residue stretch at 4–248 folds into the CN hydrolase domain; sequence FKLSLVQFLV…ETVLSAEIDL (245 aa). Catalysis depends on E43, which acts as the Proton acceptor. Catalysis depends on K112, which acts as the Proton donor. Residue C153 is the Nucleophile of the active site.

Belongs to the carbon-nitrogen hydrolase superfamily. NIT1/NIT2 family. Homodimer.

The protein localises to the cytoplasm. It catalyses the reaction 2-oxoglutaramate + H2O = 2-oxoglutarate + NH4(+). It carries out the reaction 2-oxosuccinamate + H2O = oxaloacetate + NH4(+). In terms of biological role, has omega-amidase activity. The role of omega-amidase is to remove potentially toxic intermediates by converting 2-oxoglutaramate and 2-oxosuccinamate to biologically useful 2-oxoglutarate and oxaloacetate, respectively. The protein is Omega-amidase NIT2-A (nit2a) of Xenopus laevis (African clawed frog).